Here is a 206-residue protein sequence, read N- to C-terminus: Glycerol-3-phosphate acyltransferase (206 aa).

6 consecutive transmembrane segments (helical) span residues I6–F26, K57–A77, F86–W106, V118–L138, I143–L163, and E165–W185.

Belongs to the PlsY family. In terms of assembly, probably interacts with PlsX.

The protein resides in the cell inner membrane. The catalysed reaction is an acyl phosphate + sn-glycerol 3-phosphate = a 1-acyl-sn-glycero-3-phosphate + phosphate. It participates in lipid metabolism; phospholipid metabolism. Functionally, catalyzes the transfer of an acyl group from acyl-phosphate (acyl-PO(4)) to glycerol-3-phosphate (G3P) to form lysophosphatidic acid (LPA). This enzyme utilizes acyl-phosphate as fatty acyl donor, but not acyl-CoA or acyl-ACP. This is Glycerol-3-phosphate acyltransferase from Prochlorococcus marinus (strain MIT 9211).